The chain runs to 161 residues: Cyclin-dependent protein kinase inhibitor SMR12 (161 aa).

The span at 84-93 shows a compositional bias: acidic residues; it reads EEEEVVEEEN. The disordered stretch occupies residues 84 to 106; it reads EEEEVVEEENDGFKTPTRPENRI.

Its function is as follows. Probable cyclin-dependent protein kinase (CDK) inhibitor that functions as a repressor of mitosis in the endoreduplication cell cycle. The sequence is that of Cyclin-dependent protein kinase inhibitor SMR12 from Arabidopsis thaliana (Mouse-ear cress).